Consider the following 417-residue polypeptide: Envelope glycoprotein D (417 aa).

The N-terminal stretch at 1–18 is a signal peptide; that stretch reads MQGPTLAVLGALLAVAVS. The Virion surface segment spans residues 19-360; that stretch reads LPTPAPRVTV…APATPAAPDA (342 aa). Residues Asn-41 and Asn-102 are each glycosylated (N-linked (GlcNAc...) asparagine; by host). Intrachain disulfides connect Cys-75–Cys-197, Cys-114–Cys-213, and Cys-126–Cys-135. The segment at 259–355 is disordered; sequence EESKGYEPPP…THPPPAPATP (97 aa). Residues 279 to 292 show a composition bias toward acidic residues; that stretch reads GDDEAREDEGETED. Residues 361–389 traverse the membrane as a helical segment; the sequence is VPVGVGIGIAAAAIACVAAAAAGAYFVYT. Topologically, residues 390–417 are intravirion; the sequence is RRRGAGPLPRKPKKLPAFGNVNYSALPG.

This sequence belongs to the herpesviridae glycoprotein D family.

The protein localises to the virion membrane. Functionally, envelope glycoprotein that binds to host cell entry receptors, promoting the virus entry into host cells. May trigger fusion with host membrane, by recruiting the fusion machinery composed of gB and gH/gL. The chain is Envelope glycoprotein D (gD) from Bovine herpesvirus 1.2 (strain ST) (BoHV-1).